A 181-amino-acid polypeptide reads, in one-letter code: Copper-resistant cuproprotein CopI (181 aa).

Positions 1 to 24 (MFPRRLLPASLIVLGVLFGASAQA) are cleaved as a signal peptide. Cu(2+) is bound by residues H79, C163, H168, and M173.

It belongs to the CopI family.

Its subcellular location is the periplasm. Involved in copper tolerance. This is Copper-resistant cuproprotein CopI from Pseudomonas aeruginosa (strain ATCC 15692 / DSM 22644 / CIP 104116 / JCM 14847 / LMG 12228 / 1C / PRS 101 / PAO1).